A 283-amino-acid polypeptide reads, in one-letter code: Gap junction beta-1 protein (283 aa).

Over 1-22 (MNWTGLYTLLSGVNRHSTAIGR) the chain is Cytoplasmic. A helical transmembrane segment spans residues 23 to 45 (VWLSVIFIFRIMVLVVAAESVWG). Residues 46–75 (DEKSSFICNTLQPGCNSVCYDHFFPISHVR) are Extracellular-facing. A helical membrane pass occupies residues 76-95 (LWSLQLILVSTPALLVAMHV). At 96 to 130 (AHQQHIEKKMLRLEGHGDPIHLEEVKRHKVHISGT) the chain is on the cytoplasmic side. A helical transmembrane segment spans residues 131-153 (LWWTYVISVVFRLLFEAAFMYVF). Residues 154–191 (YLLYPGYAMVRLVKCDAYPCPNTVDCFVSRPTEKTVFT) lie on the Extracellular side of the membrane. Residues 192 to 214 (VFMLAASGICIILNVAEVVYLIV) traverse the membrane as a helical segment. Over 215–283 (RACARRAQRR…AEKSDRCSAC (69 aa)) the chain is Cytoplasmic. Phosphoserine occurs at positions 233, 258, 266, and 277.

Belongs to the connexin family. Beta-type (group I) subfamily. As to quaternary structure, a connexon is composed of a hexamer of connexins. Interacts with CNST.

Its subcellular location is the cell membrane. The protein resides in the cell junction. It localises to the gap junction. Functionally, one gap junction consists of a cluster of closely packed pairs of transmembrane channels, the connexons, through which materials of low MW diffuse from one cell to a neighboring cell. The protein is Gap junction beta-1 protein (GJB1) of Equus caballus (Horse).